We begin with the raw amino-acid sequence, 89 residues long: Small ribosomal subunit protein bS16c (89 aa).

This sequence belongs to the bacterial ribosomal protein bS16 family.

The protein localises to the plastid. It localises to the chloroplast. This Drimys granadensis protein is Small ribosomal subunit protein bS16c.